The chain runs to 358 residues: Chorismate synthase (358 aa).

NADP(+) is bound at residue Arg-46. FMN-binding positions include 123 to 125, 235 to 236, Gly-275, 290 to 294, and Arg-316; these read RSS, NA, and KPTPS.

Belongs to the chorismate synthase family. In terms of assembly, homotetramer. FMNH2 is required as a cofactor.

It catalyses the reaction 5-O-(1-carboxyvinyl)-3-phosphoshikimate = chorismate + phosphate. The protein operates within metabolic intermediate biosynthesis; chorismate biosynthesis; chorismate from D-erythrose 4-phosphate and phosphoenolpyruvate: step 7/7. Functionally, catalyzes the anti-1,4-elimination of the C-3 phosphate and the C-6 proR hydrogen from 5-enolpyruvylshikimate-3-phosphate (EPSP) to yield chorismate, which is the branch point compound that serves as the starting substrate for the three terminal pathways of aromatic amino acid biosynthesis. This reaction introduces a second double bond into the aromatic ring system. The protein is Chorismate synthase of Helicobacter hepaticus (strain ATCC 51449 / 3B1).